A 295-amino-acid polypeptide reads, in one-letter code: Lipoyl synthase (295 aa).

Residues C34, C39, C45, C60, C64, C67, and S273 each coordinate [4Fe-4S] cluster. The Radical SAM core domain occupies 46 to 262 (WNKRHATIMI…KLMAYAKGFS (217 aa)).

Belongs to the radical SAM superfamily. Lipoyl synthase family. [4Fe-4S] cluster serves as cofactor.

Its subcellular location is the cytoplasm. It carries out the reaction [[Fe-S] cluster scaffold protein carrying a second [4Fe-4S](2+) cluster] + N(6)-octanoyl-L-lysyl-[protein] + 2 oxidized [2Fe-2S]-[ferredoxin] + 2 S-adenosyl-L-methionine + 4 H(+) = [[Fe-S] cluster scaffold protein] + N(6)-[(R)-dihydrolipoyl]-L-lysyl-[protein] + 4 Fe(3+) + 2 hydrogen sulfide + 2 5'-deoxyadenosine + 2 L-methionine + 2 reduced [2Fe-2S]-[ferredoxin]. Its pathway is protein modification; protein lipoylation via endogenous pathway; protein N(6)-(lipoyl)lysine from octanoyl-[acyl-carrier-protein]: step 2/2. In terms of biological role, catalyzes the radical-mediated insertion of two sulfur atoms into the C-6 and C-8 positions of the octanoyl moiety bound to the lipoyl domains of lipoate-dependent enzymes, thereby converting the octanoylated domains into lipoylated derivatives. The chain is Lipoyl synthase from Anaplasma marginale (strain St. Maries).